Reading from the N-terminus, the 234-residue chain is Transcriptional regulatory protein CseB (234 aa).

Residues histidine 6–leucine 119 enclose the Response regulatory domain. At aspartate 55 the chain carries 4-aspartylphosphate. The ompR/PhoB-type DNA-binding region spans glycine 140–alanine 234.

Phosphorylated by CseC.

The protein resides in the cytoplasm. Functionally, member of the two-component regulatory system CseB/CseC involved in the stability of the cell envelope. CseB activates transcription of RNA polymerase sigma-E factor, in response to changes in the cell envelope. The polypeptide is Transcriptional regulatory protein CseB (cseB) (Streptomyces coelicolor (strain ATCC BAA-471 / A3(2) / M145)).